The primary structure comprises 259 residues: Deoxyribose-phosphate aldolase (259 aa).

Aspartate 102 serves as the catalytic Proton donor/acceptor. Residue lysine 167 is the Schiff-base intermediate with acetaldehyde of the active site. The active-site Proton donor/acceptor is the lysine 201.

This sequence belongs to the DeoC/FbaB aldolase family. DeoC type 2 subfamily.

It localises to the cytoplasm. The catalysed reaction is 2-deoxy-D-ribose 5-phosphate = D-glyceraldehyde 3-phosphate + acetaldehyde. Its pathway is carbohydrate degradation; 2-deoxy-D-ribose 1-phosphate degradation; D-glyceraldehyde 3-phosphate and acetaldehyde from 2-deoxy-alpha-D-ribose 1-phosphate: step 2/2. Its function is as follows. Catalyzes a reversible aldol reaction between acetaldehyde and D-glyceraldehyde 3-phosphate to generate 2-deoxy-D-ribose 5-phosphate. In Shigella flexneri, this protein is Deoxyribose-phosphate aldolase.